The primary structure comprises 485 residues: GlcNAc-binding protein A (485 aa).

The first 23 residues, 1 to 23 (MKKQPKMTAIALILSGISGLAYG), serve as a signal peptide directing secretion. The region spanning 24–201 (HGYVSAVENG…SFYNVIDVKF (178 aa)) is the Chitin-binding type-4 domain. Residues 437–478 (AGTKVLASDGAIYQCKPWPYSGYCQQWTSNATQYQPGTGSHW) form the Chitin-binding type-3 domain.

The protein belongs to the GbpA family.

It localises to the secreted. Its function is as follows. Probably interacts with GlcNAc residues. May promote attachment to both epithelial cell surfaces and chitin. The sequence is that of GlcNAc-binding protein A from Vibrio cholerae serotype O1 (strain M66-2).